The primary structure comprises 275 residues: NADH-quinone oxidoreductase subunit E 1 (275 aa).

The [2Fe-2S] cluster site is built by cysteine 99, cysteine 104, cysteine 140, and cysteine 144. Residues 200–275 are disordered; sequence LQAPEPVEEK…DKSKPAKKPR (76 aa). Residues 206–221 show a composition bias toward basic and acidic residues; it reads VEEKKSVRASKAKDEQ. The segment covering 231–242 has biased composition (polar residues); sequence AKPSTATDVTNP. Residues 243–256 are compositionally biased toward low complexity; the sequence is TLKTPATARKAAAK. Positions 258 to 269 are enriched in basic and acidic residues; the sequence is VKIEGETVDKSK.

Belongs to the complex I 24 kDa subunit family. [2Fe-2S] cluster serves as cofactor.

The enzyme catalyses a quinone + NADH + 5 H(+)(in) = a quinol + NAD(+) + 4 H(+)(out). Its function is as follows. NDH-1 shuttles electrons from NADH, via FMN and iron-sulfur (Fe-S) centers, to quinones in the respiratory chain. The immediate electron acceptor for the enzyme in this species is believed to be ubiquinone. Couples the redox reaction to proton translocation (for every two electrons transferred, four hydrogen ions are translocated across the cytoplasmic membrane), and thus conserves the redox energy in a proton gradient. The polypeptide is NADH-quinone oxidoreductase subunit E 1 (nuoE1) (Rhizobium meliloti (strain 1021) (Ensifer meliloti)).